The sequence spans 397 residues: Subtilisin-like protease 3 (397 aa).

The signal sequence occupies residues 1 to 19 (MGCIKVISVFLAAIAAVDA). A propeptide spanning residues 20–116 (RAFFHNRGGN…VEHDRVVKLA (97 aa)) is cleaved from the precursor. The 82-residue stretch at 35–116 (SYIVVMKDGV…VEHDRVVKLA (82 aa)) folds into the Inhibitor I9 domain. The Peptidase S8 domain maps to 126-397 (TWGLGRVSHK…NRLLYNGSGR (272 aa)). Residues aspartate 158 and histidine 189 each act as charge relay system in the active site. The N-linked (GlcNAc...) asparagine glycan is linked to asparagine 250. The active-site Charge relay system is serine 344. Asparagine 393 carries N-linked (GlcNAc...) asparagine glycosylation.

This sequence belongs to the peptidase S8 family.

Its subcellular location is the secreted. In terms of biological role, secreted subtilisin-like serine protease with keratinolytic activity that contributes to pathogenicity. The chain is Subtilisin-like protease 3 (SUB3) from Arthroderma benhamiae (strain ATCC MYA-4681 / CBS 112371) (Trichophyton mentagrophytes).